Consider the following 299-residue polypeptide: Protease HtpX homolog (299 aa).

The next 2 helical transmembrane spans lie at 15–35 (ILLL…GYLF) and 39–59 (GLGG…SMIF). Zn(2+) is bound at residue His-143. Glu-144 is a catalytic residue. A Zn(2+)-binding site is contributed by His-147. The next 2 helical transmembrane spans lie at 158–178 (IAVA…RMMW) and 198–218 (IIML…ATLV). Glu-227 contacts Zn(2+).

It belongs to the peptidase M48B family. Requires Zn(2+) as cofactor.

It localises to the cell membrane. This chain is Protease HtpX homolog, found in Streptococcus pneumoniae (strain Taiwan19F-14).